A 330-amino-acid chain; its full sequence is tRNA-modifying protein YgfZ (330 aa).

Tryptophan 28 and tryptophan 190 together coordinate folate.

This sequence belongs to the tRNA-modifying YgfZ family.

Its subcellular location is the cytoplasm. Functionally, folate-binding protein involved in regulating the level of ATP-DnaA and in the modification of some tRNAs. It is probably a key factor in regulatory networks that act via tRNA modification, such as initiation of chromosomal replication. This chain is tRNA-modifying protein YgfZ, found in Serratia proteamaculans (strain 568).